The following is a 928-amino-acid chain: BCAS3 microtubule associated cell migration factor (928 aa).

Methionine 1 bears the N-acetylmethionine mark. Residue lysine 215 forms a Glycyl lysine isopeptide (Lys-Gly) (interchain with G-Cter in SUMO1); alternate linkage. Residue lysine 215 forms a Glycyl lysine isopeptide (Lys-Gly) (interchain with G-Cter in SUMO2); alternate linkage. Required for recruitment to preautophagosomal structure in response to mitophagy stretches follow at residues 254-312 and 437-560; these read RGGA…SRRS and YGGQ…IKAP. Serine 461, serine 480, and serine 488 each carry phosphoserine. Disordered regions lie at residues 472–518 and 795–816; these read TSKQ…PRLS and VRSD…RGVS. Composition is skewed to low complexity over residues 480–494 and 505–514; these read SPVP…GSPL and NNFTNNNPGN. 3 positions are modified to phosphoserine: serine 838, serine 886, and serine 898. Residues 868–928 form a disordered region; sequence ESPSRDVVGS…PLSLFPTGFP (61 aa). Low complexity predominate over residues 887–901; that stretch reads IETLSNSSGSTSGSI.

It belongs to the BCAS3 family. In terms of assembly, interacts with histone H3, ESR1, KAT2B and PELP1; the interactions occur in a estrogen-dependent manner. Interacts with beta-tubulin and VIM. Interacts (via C-terminal) with PHAF1; the interaction is requrired for the association with the phagophore. In terms of tissue distribution, expressed in blood islands and yolk sac blood islands (at protein level). Highly expressed in mammary tumors. Expressed in eostrogen-induced epithelial cells of mammary glands. Expressed in brain, heart, kidney, lung, liver and spleen. Expressed in embryonic stem cells, embryoid bodies, endothelial cells and fibroblasts.

The protein localises to the nucleus. It localises to the cytoplasm. It is found in the cytoskeleton. Its subcellular location is the preautophagosomal structure. Functionally, functions synergistically with PELP1 as a transcriptional coactivator of estrogen receptor-responsive genes. Stimulates histone acetyltransferase activity. Binds to chromatin. Plays a role in angiogenesis. Participates in the regulation of cell polarity and directional endothelial cell migration by mediating both the activation and recruitment of CDC42 and the reorganization of the actin cytoskeleton at the cell leading edge. Promotes filipodia formation. Plays a regulatory role in autophagic activity. In complex with PHAF1, associates with the preautophagosomal structure during both non-selective and selective autophagy. Probably binds phosphatidylinositol 3-phosphate (PtdIns3P) which would mediate the recruitment preautophagosomal structures. This is BCAS3 microtubule associated cell migration factor from Mus musculus (Mouse).